The following is a 600-amino-acid chain: Elongation factor 4 (600 aa).

The region spanning 5 to 187 (KYIRNFSIIA…AIVNKLPPPK (183 aa)) is the tr-type G domain. GTP is bound by residues 17 to 22 (DHGKST) and 134 to 137 (NKID).

The protein belongs to the TRAFAC class translation factor GTPase superfamily. Classic translation factor GTPase family. LepA subfamily.

It localises to the cell inner membrane. It catalyses the reaction GTP + H2O = GDP + phosphate + H(+). Required for accurate and efficient protein synthesis under certain stress conditions. May act as a fidelity factor of the translation reaction, by catalyzing a one-codon backward translocation of tRNAs on improperly translocated ribosomes. Back-translocation proceeds from a post-translocation (POST) complex to a pre-translocation (PRE) complex, thus giving elongation factor G a second chance to translocate the tRNAs correctly. Binds to ribosomes in a GTP-dependent manner. The polypeptide is Elongation factor 4 (Rickettsia canadensis (strain McKiel)).